The following is a 530-amino-acid chain: Portal protein (530 aa).

It belongs to the siphoviridae portal protein family. As to quaternary structure, homododecamer. Interacts with the terminase complex composed of two small and one large terminase subunits. In terms of processing, proteolytically cleaved by the viral protease during capsid maturation.

It is found in the virion. Forms the portal vertex of the capsid. This portal plays critical roles in head assembly, genome packaging, neck/tail attachment, and genome ejection. The portal protein multimerizes as a single ring-shaped homododecamer arranged around a central channel. Binds to the terminase subunits to form the packaging machine. The chain is Portal protein from Escherichia phage N15 (Bacteriophage N15).